Reading from the N-terminus, the 142-residue chain is Baculoviral IAP repeat-containing protein 5 (142 aa).

One copy of the BIR repeat lies at 18–88 (RIYTFKNWPF…KHSPGCAFLT (71 aa)). Lys23 carries the N6-acetyllysine modification. Thr34 carries the post-translational modification Phosphothreonine; by CDK1 and CDK15. Phosphothreonine is present on Thr48. Cys57, Cys60, His77, and Cys84 together coordinate Zn(2+). N6-acetyllysine is present on residues Lys90, Lys110, Lys112, and Lys115. Residue Thr117 is modified to Phosphothreonine; by AURKB.

This sequence belongs to the IAP family. As to quaternary structure, monomer or homodimer. Exists as a homodimer in the apo state and as a monomer in the CPC-bound state. The monomer protects cells against apoptosis more efficiently than the dimer. Only the dimeric form is capable of enhancing tubulin stability in cells. When phosphorylated, interacts with LAMTOR5/HBXIP; the resulting complex binds pro-CASP9, as well as active CASP9, but much less efficiently. Component of the chromosomal passenger complex (CPC) composed of at least BIRC5/survivin, CDCA8/borealin, INCENP, AURKB or AURKC; in the complex forms a triple-helix bundle-based subcomplex with INCENP and CDCA8. Interacts with JTB. Interacts (via BIR domain) with histone H3 phosphorylated at 'Thr-3' (H3pT3). Interacts with EVI5. Interacts with GTP-bound RAN in both the S and M phases of the cell cycle. Interacts with USP9X. Interacts with tubulin. Interacts with BIRC2/c-IAP1. The monomeric form interacts with XIAP/BIRC4. Both the dimeric and monomeric form can interact with DIABLO/SMAC. Interacts with BIRC6/bruce. Interacts with FBXL7; this interaction facilitates the polyubiquitination and subsequent proteasomal degradation of BIRC5 by the SCF(FBXL7) E3 ubiquitin-protein ligase complex. In terms of processing, ubiquitinated by the Cul9-RING ubiquitin-protein ligase complex, leading to its degradation. Ubiquitination is required for centrosomal targeting. Deubiquitinated by USP35 or USP38; leading to stabilization. In vitro phosphorylation at Thr-117 by AURKB prevents interaction with INCENP and localization to mitotic chromosomes. Phosphorylation at Thr-48 by CK2 is critical for its mitotic and anti-apoptotic activities. Phosphorylation at Thr-34 by CDK15 is critical for its anti-apoptotic activity.

Its subcellular location is the cytoplasm. The protein localises to the nucleus. The protein resides in the chromosome. It localises to the centromere. It is found in the cytoskeleton. Its subcellular location is the spindle. The protein localises to the kinetochore. The protein resides in the midbody. Its function is as follows. Multitasking protein that has dual roles in promoting cell proliferation and preventing apoptosis. Component of a chromosome passage protein complex (CPC) which is essential for chromosome alignment and segregation during mitosis and cytokinesis. Acts as an important regulator of the localization of this complex; directs CPC movement to different locations from the inner centromere during prometaphase to midbody during cytokinesis and participates in the organization of the center spindle by associating with polymerized microtubules. Involved in the recruitment of CPC to centromeres during early mitosis via association with histone H3 phosphorylated at 'Thr-3' (H3pT3) during mitosis. The complex with RAN plays a role in mitotic spindle formation by serving as a physical scaffold to help deliver the RAN effector molecule TPX2 to microtubules. May counteract a default induction of apoptosis in G2/M phase. The acetylated form represses STAT3 transactivation of target gene promoters. May play a role in neoplasia. Inhibitor of CASP3 and CASP7. Essential for the maintenance of mitochondrial integrity and function. The polypeptide is Baculoviral IAP repeat-containing protein 5 (Birc5) (Rattus norvegicus (Rat)).